A 288-amino-acid chain; its full sequence is Diaminopimelate epimerase (288 aa).

Substrate is bound by residues asparagine 14 and asparagine 67. Cysteine 76 functions as the Proton donor in the catalytic mechanism. Residues 77-78, asparagine 166, asparagine 199, and 217-218 each bind substrate; these read GN and ER. Cysteine 226 acts as the Proton acceptor in catalysis. 227–228 contacts substrate; sequence GT.

Belongs to the diaminopimelate epimerase family. In terms of assembly, homodimer.

The protein resides in the cytoplasm. It catalyses the reaction (2S,6S)-2,6-diaminopimelate = meso-2,6-diaminopimelate. The protein operates within amino-acid biosynthesis; L-lysine biosynthesis via DAP pathway; DL-2,6-diaminopimelate from LL-2,6-diaminopimelate: step 1/1. Catalyzes the stereoinversion of LL-2,6-diaminopimelate (L,L-DAP) to meso-diaminopimelate (meso-DAP), a precursor of L-lysine and an essential component of the bacterial peptidoglycan. The polypeptide is Diaminopimelate epimerase (Bacillus thuringiensis (strain Al Hakam)).